The sequence spans 563 residues: Rhotekin (563 aa).

Arg14 bears the Omega-N-methylarginine mark. The REM-1 domain maps to 17–98 (ALEMEFKRGR…LQRRKEAQVL (82 aa)). Phosphoserine is present on residues Ser30 and Ser106. The disordered stretch occupies residues 96 to 116 (QVLGKTSRRPSDSGPPAERSP). Arg230 bears the Asymmetric dimethylarginine mark. Phosphoserine is present on Ser232. The 108-residue stretch at 309–416 (QPTASGTLRV…WMEALWQLFF (108 aa)) folds into the PH domain. The interval 518-563 (TFSLDAVPPDHSPRARSVAPLPPQRSPRTRGLCSKGQPRTWLQSPV) is disordered. Phosphoserine is present on residues Ser520, Ser529, and Ser543.

As to quaternary structure, interacts via its C-terminal region with the TAX1BP3 PDZ domain. This interaction facilitates Rho-mediated activation of the c-Fos serum response element (SRE). Interacts with SEPT9. Specifically binds to GTP-bound RHOA, RHOB and RHOC and inhibits their GTPase activity. In terms of tissue distribution, highly expressed in prostate, moderately in kidney, heart, brain, spleen, testis, placenta, small intestine, pancreas, skeletal muscle and peripheral blood leukocytes, and weakly in ovary, colon and thymus. Weakly expressed in all normal cell lines tested. Overexpressed in various cancer cell lines.

Its function is as follows. Mediates Rho signaling to activate NF-kappa-B and may confer increased resistance to apoptosis to cells in gastric tumorigenesis. May play a novel role in the organization of septin structures. In Homo sapiens (Human), this protein is Rhotekin.